We begin with the raw amino-acid sequence, 249 residues long: Quinate/shikimate dehydrogenase (249 aa).

Residues K32 and D68 each contribute to the substrate site. NAD(+) contacts are provided by residues 93–96 (AGGA), 116–119 (NRRD), K166, 193–196 (CVYN), and G216.

This sequence belongs to the shikimate dehydrogenase family. Homodimer.

It catalyses the reaction L-quinate + NAD(+) = 3-dehydroquinate + NADH + H(+). It carries out the reaction L-quinate + NADP(+) = 3-dehydroquinate + NADPH + H(+). The catalysed reaction is shikimate + NADP(+) = 3-dehydroshikimate + NADPH + H(+). The enzyme catalyses shikimate + NAD(+) = 3-dehydroshikimate + NADH + H(+). It functions in the pathway metabolic intermediate biosynthesis; chorismate biosynthesis; chorismate from D-erythrose 4-phosphate and phosphoenolpyruvate: step 4/7. In terms of biological role, the actual biological function of YdiB remains unclear, nor is it known whether 3-dehydroshikimate or quinate represents the natural substrate. Catalyzes the reversible NAD-dependent reduction of both 3-dehydroshikimate (DHSA) and 3-dehydroquinate to yield shikimate (SA) and quinate, respectively. It can use both NAD or NADP for catalysis, however it has higher catalytic efficiency with NAD. The sequence is that of Quinate/shikimate dehydrogenase from Shigella flexneri serotype 5b (strain 8401).